The chain runs to 1024 residues: Beta-galactosidase (1024 aa).

Substrate-binding residues include Asn103 and Asp202. Residue Asp202 participates in Na(+) binding. Mg(2+)-binding residues include Glu417, His419, and Glu462. Substrate-binding positions include Glu462 and 538–541; that span reads EYAH. The active-site Proton donor is Glu462. The Nucleophile role is filled by Glu538. Residue Asn598 coordinates Mg(2+). Na(+) is bound by residues Phe602 and Asn605. Asn605 and Trp1000 together coordinate substrate.

The protein belongs to the glycosyl hydrolase 2 family. As to quaternary structure, homotetramer. Requires Mg(2+) as cofactor. The cofactor is Na(+).

The catalysed reaction is Hydrolysis of terminal non-reducing beta-D-galactose residues in beta-D-galactosides.. The sequence is that of Beta-galactosidase from Escherichia coli O9:H4 (strain HS).